We begin with the raw amino-acid sequence, 258 residues long: Translocon-associated protein subunit alpha (258 aa).

Residues 1-24 form the signal peptide; that stretch reads MMNLRVLFLALLLLASPLLQVARC. Topologically, residues 25 to 190 are lumenal; the sequence is QSDAEDHSSL…ESGGLLSGES (166 aa). 3 N-linked (GlcNAc...) asparagine glycosylation sites follow: Asn57, Asn119, and Asn127. The helical transmembrane segment at 191 to 209 threads the bilayer; the sequence is VFLLTLGIGLLLLLGLWAY. Residues 210–258 lie on the Cytoplasmic side of the membrane; sequence SQVQRLTKKTKKVSKVEVGTRSTEASLDEWLEGTTLAKTSSGKTKNKKN.

The protein belongs to the TRAP-alpha family. Heterotetramer of TRAP-alpha, TRAP-beta, TRAP-delta and TRAP-gamma. In terms of processing, phosphorylated in its cytoplasmic tail.

The protein localises to the endoplasmic reticulum membrane. In terms of biological role, TRAP proteins are part of a complex whose function is to bind calcium to the ER membrane and thereby regulate the retention of ER resident proteins. May be involved in the recycling of the translocation apparatus after completion of the translocation process or may function as a membrane-bound chaperone facilitating folding of translocated proteins. This Arabidopsis thaliana (Mouse-ear cress) protein is Translocon-associated protein subunit alpha.